Reading from the N-terminus, the 1218-residue chain is Structural maintenance of chromosomes protein 2 (1218 aa).

32–39 is a binding site for ATP; that stretch reads GLNGSGKS. A coiled-coil region spans residues 209-517; that stretch reads VKLKKEKEEY…INSVKIDYKI (309 aa). An SMC hinge domain is found at 525–654; it reads DVLGQIYKLI…CSNVDLCKKI (130 aa). Coiled-coil stretches lie at residues 693–949 and 978–1045; these read LNYE…DTVK and RHDV…KKSE.

It belongs to the SMC family. SMC2 subfamily.

Its subcellular location is the nucleus. May play a role in the conversion of interphase chromatin into condensed chromosomes. This chain is Structural maintenance of chromosomes protein 2, found in Plasmodium falciparum (isolate 3D7).